The chain runs to 196 residues: Transmembrane protein 126A (196 aa).

The Mitochondrial matrix segment spans residues Met-1 to Glu-34. The helical transmembrane segment at Tyr-35 to Phe-55 threads the bilayer. Residues Arg-56–Arg-57 are Mitochondrial intermembrane-facing. A helical transmembrane segment spans residues Ile-58–Leu-78. Over Thr-79–Arg-106 the chain is Mitochondrial matrix. A helical membrane pass occupies residues Gly-107–Asn-127. Topologically, residues Gly-128 to Lys-159 are mitochondrial intermembrane. The chain crosses the membrane as a helical span at residues Met-160–Ser-176. At Arg-177 to His-196 the chain is on the mitochondrial matrix side.

Belongs to the TMEM126 family. As to quaternary structure, interacts with OXA1L; promoting cotranslational quality control in mitochondria. In terms of tissue distribution, in the retina, significant levels of expression are detected in the ganglion cell layer, the optic nerve head, the outer plexiform layer, and in the outer ellipsoide length of photoreceptor inner segments.

It is found in the mitochondrion inner membrane. Functionally, protein required for the cotranslational protein quality control in the inner membrane of the mitochondria. Associates with newly synthesized polypeptides and may act as a chaperone that cooperates with OXA1L for the insertion of newly synthesized mitochondrial proteins into the inner membrane. Required for the assembly of the ND4 module of mitochondrial complex I. This is Transmembrane protein 126A from Mus musculus (Mouse).